The sequence spans 58 residues: uncharacterized protein (58 aa).

This is an uncharacterized protein from Dictyostelium discoideum (Social amoeba).